We begin with the raw amino-acid sequence, 463 residues long: Lactadherin (463 aa).

The N-terminal stretch at 1 to 22 is a signal peptide; it reads MQVSRVLAALCGMLLCASGLFA. 2 consecutive EGF-like domains span residues 24-61 and 64-108; these read SGDFCDSSLCLNGGTCLTGQDNDIYCLCPEGFTGLVCN and ERGP…IHCE. Disulfide bonds link C28/C39, C33/C49, and C51/C60. N61 carries an N-linked (GlcNAc...) asparagine glycan. Cystine bridges form between C68/C79, C73/C96, C98/C107, C148/C303, C290/C294, and C308/C463. The Cell attachment site signature appears at 87-89; it reads RGD. 2 consecutive F5/8 type C domains span residues 148–303 and 308–463; these read CSTQ…LLGC and CSEP…LLGC. N266 carries N-linked (GlcNAc...) asparagine glycosylation. N316 and N426 each carry an N-linked (GlcNAc...) asparagine glycan.

Post-translationally, N-glycosylated. Isoform 1 also exists in both an O-glycosylated and a non-O-glycosylated form. In terms of tissue distribution, mammary epithelial cell surfaces and spermatozoan. Isoform 2 is present in brain, heart, kidney and spleen and at low levels in lung, liver, small intestine and testis.

It localises to the membrane. It is found in the secreted. The protein localises to the cytoplasmic vesicle. Its subcellular location is the secretory vesicle. The protein resides in the acrosome membrane. Functionally, contributes to phagocytic removal of apoptotic cells in many tissues. Specific ligand for the alpha-v/beta-3 and alpha-v/beta-5 receptors. Also binds to phosphatidylserine-enriched cell surfaces in a receptor-independent manner. Zona pellucida-binding protein which may play a role in gamete interaction. Plays an important role in the maintenance of intestinal epithelial homeostasis and the promotion of mucosal healing. Promotes VEGF-dependent neovascularization. The protein is Lactadherin (Mfge8) of Mus musculus (Mouse).